A 438-amino-acid chain; its full sequence is L-cysteine:1D-myo-inositol 2-amino-2-deoxy-alpha-D-glucopyranoside ligase (438 aa).

Residues Met1–Gly27 form a disordered region. Cys44 is a Zn(2+) binding site. Residues Cys44–Thr47, Thr59, and Asn82–Thr84 each bind L-cysteinyl-5'-AMP. A 'HIGH' region motif is present at residues Ile46–His56. Residues Asp208–Pro213 carry the 'ERGGDP' region motif. Position 249 (Trp249) interacts with L-cysteinyl-5'-AMP. Residue Cys253 participates in Zn(2+) binding. An L-cysteinyl-5'-AMP-binding site is contributed by Gly271–Asp273. Residue His278 participates in Zn(2+) binding. An L-cysteinyl-5'-AMP-binding site is contributed by Val304. Residues Lys310–Ser314 carry the 'KMSKS' region motif.

The protein belongs to the class-I aminoacyl-tRNA synthetase family. MshC subfamily. In terms of assembly, monomer. Zn(2+) serves as cofactor.

The enzyme catalyses 1D-myo-inositol 2-amino-2-deoxy-alpha-D-glucopyranoside + L-cysteine + ATP = 1D-myo-inositol 2-(L-cysteinylamino)-2-deoxy-alpha-D-glucopyranoside + AMP + diphosphate + H(+). Its function is as follows. Catalyzes the ATP-dependent condensation of GlcN-Ins and L-cysteine to form L-Cys-GlcN-Ins. The protein is L-cysteine:1D-myo-inositol 2-amino-2-deoxy-alpha-D-glucopyranoside ligase of Kocuria rhizophila (strain ATCC 9341 / DSM 348 / NBRC 103217 / DC2201).